The following is a 93-amino-acid chain: MGIFDWKHWIVILVVVVLVFGTKKLKNLGTDVGESIKGFRKAMNDDEKPAEPVVPPAAQPVPPVQPQQSAPLNQPHTIDVQAQKVEEPTRKDS.

The chain crosses the membrane as a helical span at residues 1–21 (MGIFDWKHWIVILVVVVLVFG). The disordered stretch occupies residues 43–93 (MNDDEKPAEPVVPPAAQPVPPVQPQQSAPLNQPHTIDVQAQKVEEPTRKDS). Positions 52-65 (PVVPPAAQPVPPVQ) are enriched in pro residues. Residues 84 to 93 (KVEEPTRKDS) are compositionally biased toward basic and acidic residues.

It belongs to the TatA/E family. The Tat system comprises two distinct complexes: a TatABC complex, containing multiple copies of TatA, TatB and TatC subunits, and a separate TatA complex, containing only TatA subunits. Substrates initially bind to the TatABC complex, which probably triggers association of the separate TatA complex to form the active translocon.

The protein resides in the cell inner membrane. Functionally, part of the twin-arginine translocation (Tat) system that transports large folded proteins containing a characteristic twin-arginine motif in their signal peptide across membranes. TatA could form the protein-conducting channel of the Tat system. In Pseudomonas fluorescens (strain ATCC BAA-477 / NRRL B-23932 / Pf-5), this protein is Sec-independent protein translocase protein TatA.